A 213-amino-acid polypeptide reads, in one-letter code: Protein Flattop (213 aa).

Positions Val127–Lys213 are disordered. Over residues Gln151–Lys213 the composition is skewed to polar residues.

This sequence belongs to the Flattop family.

Its subcellular location is the cytoplasm. It localises to the cytoskeleton. It is found in the cilium basal body. The protein resides in the cell projection. The protein localises to the cilium. Its subcellular location is the apical cell membrane. It localises to the cilium axoneme. Microtubule inner protein (MIP) part of the dynein-decorated doublet microtubules (DMTs) in cilia axoneme. Acts as a regulator of cilium basal body docking and positioning in mono- and multiciliated cells. Regulates basal body docking and cilia formation in multiciliated lung cells. Regulates kinocilium positioning and stereocilia bundle morphogenesis in the inner ear. This Danio rerio (Zebrafish) protein is Protein Flattop.